Reading from the N-terminus, the 85-residue chain is Defensin-like protein 76 (85 aa).

The N-terminal stretch at 1 to 27 (MQNQKHSHILTAITIVLLFAMAAKINA) is a signal peptide. Cystine bridges form between cysteine 35–cysteine 70, cysteine 40–cysteine 59, cysteine 44–cysteine 68, and cysteine 48–cysteine 69.

It belongs to the DEFL family.

The protein localises to the secreted. This Arabidopsis thaliana (Mouse-ear cress) protein is Defensin-like protein 76 (LCR86).